The chain runs to 528 residues: Glutamyl-tRNA(Gln) amidotransferase subunit B, mitochondrial (528 aa).

The protein belongs to the GatB/GatE family. GatB subfamily. In terms of assembly, subunit of the heterotrimeric GatFAB amidotransferase (AdT) complex, composed of A, B and F subunits.

It is found in the mitochondrion. The enzyme catalyses L-glutamyl-tRNA(Gln) + L-glutamine + ATP + H2O = L-glutaminyl-tRNA(Gln) + L-glutamate + ADP + phosphate + H(+). Allows the formation of correctly charged Gln-tRNA(Gln) through the transamidation of misacylated Glu-tRNA(Gln) in the mitochondria. The reaction takes place in the presence of glutamine and ATP through an activated gamma-phospho-Glu-tRNA(Gln). This chain is Glutamyl-tRNA(Gln) amidotransferase subunit B, mitochondrial, found in Clavispora lusitaniae (strain ATCC 42720) (Yeast).